The following is a 772-amino-acid chain: Subtilisin-like protease SBT5.3 (772 aa).

Residues methionine 1 to alanine 25 form the signal peptide. An Inhibitor I9 domain is found at serine 31–histidine 116. The 509-residue stretch at serine 120 to valine 628 folds into the Peptidase S8 domain. Aspartate 153 functions as the Charge relay system in the catalytic mechanism. Asparagine 211 is a glycosylation site (N-linked (GlcNAc...) asparagine). Histidine 223 functions as the Charge relay system in the catalytic mechanism. Residues asparagine 246, asparagine 306, and asparagine 396 are each glycosylated (N-linked (GlcNAc...) asparagine). The PA domain maps to serine 398–isoleucine 480. The Charge relay system role is filled by serine 561. N-linked (GlcNAc...) asparagine glycans are attached at residues asparagine 606, asparagine 651, asparagine 662, asparagine 684, and asparagine 725.

It belongs to the peptidase S8 family. Expressed specifically at sites of lateral root emergence.

The protein resides in the secreted. It is found in the cell wall. Serine protease. Has a substrate preference for the hydrophobic residues Phe and Ala and the basic residue Asp in the P1 position, and for Asp, Leu or Ala in the P1' position. May play a role in the degradation of structural proteins in the extracellular matrix of cells located above sites of lateral root formation and thus facilitate lateral root emergence. This is Subtilisin-like protease SBT5.3 (AIR3) from Arabidopsis thaliana (Mouse-ear cress).